A 549-amino-acid chain; its full sequence is Glucose-6-phosphate isomerase (549 aa).

Glu-353 serves as the catalytic Proton donor. Residues His-384 and Lys-513 contribute to the active site.

This sequence belongs to the GPI family.

Its subcellular location is the cytoplasm. It carries out the reaction alpha-D-glucose 6-phosphate = beta-D-fructose 6-phosphate. The protein operates within carbohydrate biosynthesis; gluconeogenesis. It functions in the pathway carbohydrate degradation; glycolysis; D-glyceraldehyde 3-phosphate and glycerone phosphate from D-glucose: step 2/4. Catalyzes the reversible isomerization of glucose-6-phosphate to fructose-6-phosphate. This chain is Glucose-6-phosphate isomerase, found in Brucella ovis (strain ATCC 25840 / 63/290 / NCTC 10512).